The following is a 79-amino-acid chain: Defensin 2 (79 aa).

Residues 1–32 (VQKRTIIMEKKMAGFCIFFLILFLAQEYGVEG) form the signal peptide. 3 disulfides stabilise this stretch: C35–C79, C46–C67, and C52–C73.

This sequence belongs to the DEFL family. May form dimers. In terms of processing, not glycosylated. Has 4 disulfide bonds.

Its function is as follows. Probably has antifungal activity. The protein is Defensin 2 of Arachis hypogaea (Peanut).